Reading from the N-terminus, the 1225-residue chain is Chromosome-associated kinesin KIF4 (1225 aa).

Positions 9-338 constitute a Kinesin motor domain; sequence IPVRVVRCRP…LRYADRARKI (330 aa). 88–95 serves as a coordination point for ATP; it reads GQTGSGKT. The stretch at 352–1003 forms a coiled coil; sequence ELNHLKQQVQ…LKQKMLLVQV (652 aa). Disordered stretches follow at residues 498 to 520, 717 to 744, and 1006 to 1047; these read QDAA…FTTQ, NKRL…GMEG, and GQKL…PTPE. A compositionally biased stretch (polar residues) spans 507–520; the sequence is GQVTKRSSDDFTTQ. Residues 719–738 show a composition bias toward basic and acidic residues; the sequence is RLKDALQKQREAADKRKESQ. The globular stretch occupies residues 1004–1225; sequence ASGQKLRRDQ…GCTPIKEEID (222 aa).

This sequence belongs to the TRAFAC class myosin-kinesin ATPase superfamily. Kinesin family. Chromokinesin subfamily. [2Fe-2S] cluster is required as a cofactor. The cofactor is [4Fe-4S] cluster. Expressed in proliferating cells; neuroepithelium of embryos.

The protein resides in the nucleus. Its subcellular location is the chromosome. It localises to the cytoplasm. The protein localises to the cytoskeleton. In terms of biological role, iron-sulfur (Fe-S) cluster binding motor protein that has a role in chromosome segregation during mitosis. Required for mitotic chromosomal positioning and bipolar spindle stabilization. This is Chromosome-associated kinesin KIF4 (KIF4) from Gallus gallus (Chicken).